Consider the following 413-residue polypeptide: Phosphoglycerate kinase (413 aa).

Residues 19–21 (DLN), R34, 57–60 (HQSK), R114, and R154 each bind substrate. ATP-binding positions include E332 and 358 to 361 (GGHS).

Belongs to the phosphoglycerate kinase family. As to quaternary structure, monomer.

It is found in the cytoplasm. The enzyme catalyses (2R)-3-phosphoglycerate + ATP = (2R)-3-phospho-glyceroyl phosphate + ADP. It participates in carbohydrate degradation; glycolysis; pyruvate from D-glyceraldehyde 3-phosphate: step 2/5. The chain is Phosphoglycerate kinase from Thermococcus sibiricus (strain DSM 12597 / MM 739).